The following is a 1386-amino-acid chain: Pleckstrin homology domain-containing family G member 2 (1386 aa).

2 disordered regions span residues 1–21 (MPEGAQGLSLSKPSPSLGCGR) and 36–82 (TAPA…PLPG). 2 stretches are compositionally biased toward low complexity: residues 8–17 (LSLSKPSPSL) and 45–62 (SPRGSGSSTSLSTVGSEG). Ser90 is modified (phosphoserine). The region spanning 102–283 (RLERVAREIV…TAVAWYINDM (182 aa)) is the DH domain. Positions 313–411 (ELVLEGAFRG…WIHCLQRLFF (99 aa)) constitute a PH domain. Disordered regions lie at residues 436–540 (KSKP…PSGT), 554–612 (GLRD…PSPL), 701–739 (EPAEAPATRRELFSGSNPGKLGEPPSGGKAGPEEDEEGV), 790–815 (ILEDSDLGGDSGSGKAGAPSSERTAS), and 829–859 (QQMQRAETRASANAPRRRPRVLAQPQPSPCL). Thr445 is subject to Phosphothreonine. Phosphoserine is present on residues Ser450 and Ser469. The segment covering 592–603 (SEEEEEEEEGLE) has biased composition (acidic residues). Phosphoserine is present on residues Ser911 and Ser1049. Disordered regions lie at residues 1037–1099 (PVPK…PLPC) and 1162–1191 (TSPKQGSLPDIQGPAAAPPLPEPSLTDTQV). Composition is skewed to polar residues over residues 1048–1059 (ESPTNIPLTKQG) and 1073–1086 (QPIQPLSWHGSSLD). At Thr1257 the chain carries Phosphothreonine. Ser1261 and Ser1310 each carry phosphoserine. 2 disordered regions span residues 1291–1333 (ARRQ…ARRL) and 1367–1386 (TQESMGLHRAQGAPDAPFHM). Residues 1301-1317 (PAASRGSWSSAPTSRAS) are compositionally biased toward low complexity. Over residues 1318-1330 (SPPPQPQPPPPPA) the composition is skewed to pro residues.

In terms of biological role, may be a transforming oncogene with exchange activity for CDC42. May be a guanine-nucleotide exchange factor (GEF) for RAC1 and CDC42. Activated by the binding to subunits beta and gamma of the heterotrimeric guanine nucleotide-binding protein (G protein). Involved in the regulation of actin polymerization. The polypeptide is Pleckstrin homology domain-containing family G member 2 (PLEKHG2) (Homo sapiens (Human)).